The sequence spans 350 residues: Guanine nucleotide-binding protein G(t) subunit alpha-1 (350 aa).

The segment at 1 to 21 is disordered; it reads MGAGASAEEKHSRELEKKLKE. Glycine 2 carries the N-myristoyl glycine lipid modification. Residues 7–21 show a composition bias toward basic and acidic residues; the sequence is AEEKHSRELEKKLKE. One can recognise a G-alpha domain in the interval 28 to 350; it reads RTVKLLLLGA…KENLKDCGLF (323 aa). The interval 31–44 is G1 motif; sequence KLLLLGAGESGKST. 36–43 serves as a coordination point for GTP; sequence GAGESGKS. Serine 43 lines the Mg(2+) pocket. Residue tyrosine 142 is modified to Phosphotyrosine. Residues aspartate 146, 171 to 177, glycine 199, 265 to 268, and alanine 322 contribute to the GTP site; these read LRSRVKT and NKKD. Positions 169-177 are G2 motif; sequence DVLRSRVKT. Residue threonine 177 coordinates Mg(2+). Positions 192–201 are G3 motif; sequence FRMFDVGGQR. The tract at residues 261-268 is G4 motif; that stretch reads VLFLNKKD. The segment at 320–325 is G5 motif; the sequence is TCATDT. The interval 340–350 is interaction with RHO; the sequence is IKENLKDCGLF.

This sequence belongs to the G-alpha family. G(i/o/t/z) subfamily. As to quaternary structure, heterotrimeric G proteins are composed of 3 subunits alpha, beta and gamma. The alpha chain contains the guanine nucleotide binding site. Interacts with RHO. Interacts with RGS9 and PDE6G. Interacts (when myristoylated) with UNC119; interaction is required for localization in sensory neurons. As to expression, in the retina, expressed in the rod photoreceptors.

It is found in the cell projection. The protein localises to the cilium. Its subcellular location is the photoreceptor outer segment. The protein resides in the membrane. It localises to the photoreceptor inner segment. Its function is as follows. Functions as a signal transducer for the rod photoreceptor RHO. Required for normal RHO-mediated light perception by the retina. Guanine nucleotide-binding proteins (G proteins) function as transducers downstream of G protein-coupled receptors (GPCRs), such as the photoreceptor RHO. The alpha chain contains the guanine nucleotide binding site and alternates between an active, GTP-bound state and an inactive, GDP-bound state. Activated RHO promotes GDP release and GTP binding. Signaling is mediated via downstream effector proteins, such as cGMP-phosphodiesterase. This chain is Guanine nucleotide-binding protein G(t) subunit alpha-1 (Gnat1), found in Mus musculus (Mouse).